Reading from the N-terminus, the 292-residue chain is 33 kDa chaperonin (292 aa).

Disulfide bonds link C238–C240 and C271–C274.

It belongs to the HSP33 family. Post-translationally, under oxidizing conditions two disulfide bonds are formed involving the reactive cysteines. Under reducing conditions zinc is bound to the reactive cysteines and the protein is inactive.

The protein resides in the cytoplasm. Redox regulated molecular chaperone. Protects both thermally unfolding and oxidatively damaged proteins from irreversible aggregation. Plays an important role in the bacterial defense system toward oxidative stress. The sequence is that of 33 kDa chaperonin from Alkaliphilus metalliredigens (strain QYMF).